The following is a 210-amino-acid chain: Na(+)-translocating NADH-quinone reductase subunit D (210 aa).

5 helical membrane-spanning segments follow: residues 42–62, 72–92, 103–123, 131–151, and 178–198; these read FVMT…VSLI, IIVQ…VLKA, VFVG…AFAM, LIDG…VGFF, and NGLM…IWVI.

Belongs to the NqrDE/RnfAE family. In terms of assembly, composed of six subunits; NqrA, NqrB, NqrC, NqrD, NqrE and NqrF.

It is found in the cell inner membrane. The enzyme catalyses a ubiquinone + n Na(+)(in) + NADH + H(+) = a ubiquinol + n Na(+)(out) + NAD(+). Its function is as follows. NQR complex catalyzes the reduction of ubiquinone-1 to ubiquinol by two successive reactions, coupled with the transport of Na(+) ions from the cytoplasm to the periplasm. NqrA to NqrE are probably involved in the second step, the conversion of ubisemiquinone to ubiquinol. The chain is Na(+)-translocating NADH-quinone reductase subunit D from Vibrio campbellii (strain ATCC BAA-1116).